A 1730-amino-acid polypeptide reads, in one-letter code: Myosin-7 (1730 aa).

The Myosin N-terminal SH3-like domain occupies 8 to 56; the sequence is TVGSHVWVEDPDDAWIDGEVEEVNSEEITVNCSGKTVVAKLNNVYPKDP. The 671-residue stretch at 61-731 folds into the Myosin motor domain; sequence LGVDDMTKLA…QMAEMDAHRA (671 aa). Residues 155 to 162 and 208 to 216 each bind ATP; these read GESGAGKT and NNNSSRFGK. Actin-binding stretches follow at residues 494-528, 530-553, 588-612, and 612-634; these read LIEKKPGGIIALLDEACMFPRSTHDTFAQKLYQTF, NHKRFGKPKLAQTDFTICHYAGDV, FPPLPEESSKTSKFSSIGSQFKQQL, and LQSLLESLSTTEPHYIRCVKPNN. 4 IQ domains span residues 757-786, 782-811, 831-850, and 853-882; these read LQAASTEIQALCRGQVARVWFETMRREAAS, REAASLRIQKQARTYICQNAYKTLCSSACS, RRATIIIQSQIRRCLCHQRY, and TKKAAITTQCGWRVKVARRELRNLKMAAKE. Residues 883-1224 adopt a coiled-coil conformation; sequence TGALQDAKTK…VSDMETAEQI (342 aa). The Dilute domain occupies 1327 to 1678; that stretch reads DRIVPVFGSA…ISNLKLLLTN (352 aa). 2 disordered regions span residues 1367 to 1387 and 1456 to 1520; these read QSSTGSSPTKPPQPTSFFGRM and DSSV…SSEE. Over residues 1456–1465 the composition is skewed to low complexity; the sequence is DSSVVNSPSK. Residues 1475 to 1508 show a composition bias toward basic and acidic residues; that stretch reads SSEENSPKKSSEENSPKESSGDKSPQKLSDDNSP.

This sequence belongs to the TRAFAC class myosin-kinesin ATPase superfamily. Myosin family. Plant myosin class XI subfamily. As to quaternary structure, homodimer.

Myosin heavy chain that is required for the cell cycle-regulated transport of various organelles and proteins for their segregation. Functions by binding with its tail domain to receptor proteins on organelles and exerting force with its N-terminal motor domain against actin filaments, thereby transporting its cargo along polarized actin cables. The chain is Myosin-7 (XI-A) from Arabidopsis thaliana (Mouse-ear cress).